Consider the following 221-residue polypeptide: Thymidylate kinase (221 aa).

11–18 (GPDGAGKT) is a binding site for ATP.

Belongs to the thymidylate kinase family.

The catalysed reaction is dTMP + ATP = dTDP + ADP. Phosphorylation of dTMP to form dTDP in both de novo and salvage pathways of dTTP synthesis. This chain is Thymidylate kinase, found in Lactiplantibacillus plantarum (strain ATCC BAA-793 / NCIMB 8826 / WCFS1) (Lactobacillus plantarum).